We begin with the raw amino-acid sequence, 55 residues long: Caltrin-like protein 2 (55 aa).

The region spanning 7–55 (AINRPGSCPRVMIYCPARHPPNKCTSDYDCPKPQKCCPGYCGKQCYQPE) is the WAP domain.

Glycosylated.

Inhibits calcium transport into spermatozoa. In Cavia porcellus (Guinea pig), this protein is Caltrin-like protein 2.